The chain runs to 341 residues: MKEPAFWRTDGGRGSGALARALLAPLGWIHAWAVARRIRKATPVRIGPKVVCVGNLTVGGTGKTPVTQTLMQRLAEMDLTAASLSRGYGGREAGPLRIDPATHDASTVGDEPLLLARTGQAWIARDRAAGGRAIEAAGGVDLVLMDDGHQNPDLAKDCSIVVVDGLTGWGPGTIVPAGPLREPVATGLARADAVIVMMPDAATEPDWTGLGLSDLSIPVFHAWLEPLAPPPAGKLVAFAGIGRPEKFFDALRAAGGDIGEVAVYGDHHAFNAGDLRHLDALAAAHDAQLITTEKDWVRLPVDIQARVTAWPVRAVFANPGALDGLLRDVMDADMDAGGEAG.

57–64 (TVGGTGKT) contacts ATP.

This sequence belongs to the LpxK family.

It catalyses the reaction a lipid A disaccharide + ATP = a lipid IVA + ADP + H(+). It participates in glycolipid biosynthesis; lipid IV(A) biosynthesis; lipid IV(A) from (3R)-3-hydroxytetradecanoyl-[acyl-carrier-protein] and UDP-N-acetyl-alpha-D-glucosamine: step 6/6. In terms of biological role, transfers the gamma-phosphate of ATP to the 4'-position of a tetraacyldisaccharide 1-phosphate intermediate (termed DS-1-P) to form tetraacyldisaccharide 1,4'-bis-phosphate (lipid IVA). The chain is Tetraacyldisaccharide 4'-kinase from Maricaulis maris (strain MCS10) (Caulobacter maris).